The following is a 520-amino-acid chain: Maturase K (520 aa).

The protein belongs to the intron maturase 2 family. MatK subfamily.

It is found in the plastid. Its subcellular location is the chloroplast. Usually encoded in the trnK tRNA gene intron. Probably assists in splicing its own and other chloroplast group II introns. This Iris cristata (Dwarf crested iris) protein is Maturase K.